The chain runs to 378 residues: Protein arginine N-methyltransferase 6 (378 aa).

Positions 1 to 46 (MSLSKKRKLESGDSGGAGAGGEGAEEENGGEQEAAPPRPRRTKSER) are disordered. Over residues 13–22 (DSGGAGAGGE) the composition is skewed to gly residues. At R38 the chain carries Asymmetric dimethylarginine; by autocatalysis. Residues 47-377 (DQLYYECYSD…EEKTKDFAME (331 aa)) form the SAM-dependent MTase PRMT-type domain. H60, R69, G93, E115, and E144 together coordinate S-adenosyl-L-methionine. Active-site residues include E158 and E167.

Belongs to the class I-like SAM-binding methyltransferase superfamily. Protein arginine N-methyltransferase family. PRMT6 subfamily. Interacts with (and methylates) HIV-1 Tat, Rev and Nucleocapsid protein p7 (NC). Interacts with EPB41L3 and NCOA1. Post-translationally, automethylation enhances its stability.

It is found in the nucleus. It catalyses the reaction L-arginyl-[protein] + 2 S-adenosyl-L-methionine = N(omega),N(omega)-dimethyl-L-arginyl-[protein] + 2 S-adenosyl-L-homocysteine + 2 H(+). In terms of biological role, arginine methyltransferase that can catalyze the formation of both omega-N monomethylarginine (MMA) and asymmetrical dimethylarginine (aDMA), with a strong preference for the formation of aDMA. Preferentially methylates arginyl residues present in a glycine and arginine-rich domain and displays preference for monomethylated substrates. Specifically mediates the asymmetric dimethylation of histone H3 'Arg-2' to form H3R2me2a. H3R2me2a represents a specific tag for epigenetic transcriptional repression and is mutually exclusive with methylation on histone H3 'Lys-4' (H3K4me2 and H3K4me3). Acts as a transcriptional repressor of various genes such as HOXA2, THBS1 and TP53. Repression of TP53 blocks cellular senescence. Also methylates histone H2A and H4 'Arg-3' (H2AR3me and H4R3me, respectively). Acts as a regulator of DNA base excision during DNA repair by mediating the methylation of DNA polymerase beta (POLB), leading to the stimulation of its polymerase activity by enhancing DNA binding and processivity. Methylates HMGA1. Regulates alternative splicing events. Acts as a transcriptional coactivator of a number of steroid hormone receptors including ESR1, ESR2, PGR and NR3C1. Promotes fasting-induced transcriptional activation of the gluconeogenic program through methylation of the CRTC2 transcription coactivator. Methylates GPS2, protecting GPS2 from ubiquitination and degradation. Methylates SIRT7, inhibiting SIRT7 histone deacetylase activity and promoting mitochondria biogenesis. The sequence is that of Protein arginine N-methyltransferase 6 (Prmt6) from Mus musculus (Mouse).